We begin with the raw amino-acid sequence, 140 residues long: Putative septation protein SpoVG (140 aa).

The segment at 88–127 (VAPQAGGLQGAEEPTAVEPAPQLQDESELPWEPGDDGEGA) is disordered. Residues 112-124 (DESELPWEPGDDG) are compositionally biased toward acidic residues.

The protein belongs to the SpoVG family.

Its function is as follows. Could be involved in septation. This is Putative septation protein SpoVG from Symbiobacterium thermophilum (strain DSM 24528 / JCM 14929 / IAM 14863 / T).